Reading from the N-terminus, the 814-residue chain is E3 ubiquitin-protein ligase TRIM71 (814 aa).

The RING-type zinc-finger motif lies at 12 to 76 (CPLCKEMCVS…SLQLRCPVCD (65 aa)). The segment at 111-146 (QQQSNGGRTASNRQRSASCSSSGLLRRAPPSQSEPR) is disordered. A compositionally biased stretch (low complexity) spans 120 to 138 (ASNRQRSASCSSSGLLRRA). The B box-type 1; atypical zinc finger occupies 142-189 (QSEPRCSSCDDGNGASSHCLDCQENLCDNCLRAHQRVRLTKDHFIERF). Zn(2+) is bound by residues C147, C150, C171, H175, C224, H227, C247, and H252. A B box-type 2 zinc finger spans residues 219 to 260 (PERLYCQQHDEEVLHFYCDSCSVPICRECTMGRHAGHSFVYL). The stretch at 282–370 (RQAIQLSLEQ…INAVQQVLEE (89 aa)) forms a coiled coil. The Filamin repeat unit spans residues 425-526 (SSGAFAALTK…IENSPFKVNV (102 aa)). NHL repeat units lie at residues 539–582 (TLSF…FKPC), 586–629 (HHKF…FTFE), 633–676 (LLKF…FGPD), 680–723 (LNKY…IKPD), 727–770 (AHFL…FEPN), and 774–814 (LCKF…ILAF).

This sequence belongs to the TRIM/RBCC family.

It is found in the cytoplasm. The protein localises to the P-body. The catalysed reaction is S-ubiquitinyl-[E2 ubiquitin-conjugating enzyme]-L-cysteine + [acceptor protein]-L-lysine = [E2 ubiquitin-conjugating enzyme]-L-cysteine + N(6)-ubiquitinyl-[acceptor protein]-L-lysine.. Its pathway is protein modification; protein ubiquitination. E3 ubiquitin-protein ligase that cooperates with the microRNAs (miRNAs) machinery and promotes embryonic stem cells proliferation and maintenance. Binds to miRNAs and participates in post-transcriptional repression of transcripts. Required to maintain proliferation and prevent premature differentiation of neural progenitor cells during early neural development. This chain is E3 ubiquitin-protein ligase TRIM71 (trim71), found in Xenopus tropicalis (Western clawed frog).